A 325-amino-acid chain; its full sequence is Pseudouridylate synthase TRUB2, mitochondrial (325 aa).

Asp101 serves as the catalytic Nucleophile. The tract at residues 292–325 (QTEGVSRGNPDREAAEGPIPGPSRGAEGEGELRA) is disordered.

This sequence belongs to the pseudouridine synthase TruB family.

The protein localises to the mitochondrion matrix. The enzyme catalyses a uridine in mRNA = a pseudouridine in mRNA. The catalysed reaction is uridine(55) in tRNA = pseudouridine(55) in tRNA. Minor enzyme contributing to the isomerization of uridine to pseudouridine (pseudouridylation) of specific mitochondrial mRNAs (mt-mRNAs) such as COXI and COXIII mt-mRNAs, modulating the efficiency of mitochondrial protein synthesis without changes in transcript abundance or stability. Also catalyzes pseudouridylation of some tRNAs, including synthesis of pseudouridine(55) from uracil-55, in the psi GC loop of a subset of tRNAs. The sequence is that of Pseudouridylate synthase TRUB2, mitochondrial from Xenopus tropicalis (Western clawed frog).